A 95-amino-acid chain; its full sequence is Co-chaperonin GroES (95 aa).

This sequence belongs to the GroES chaperonin family. As to quaternary structure, heptamer of 7 subunits arranged in a ring. Interacts with the chaperonin GroEL.

The protein resides in the cytoplasm. Together with the chaperonin GroEL, plays an essential role in assisting protein folding. The GroEL-GroES system forms a nano-cage that allows encapsulation of the non-native substrate proteins and provides a physical environment optimized to promote and accelerate protein folding. GroES binds to the apical surface of the GroEL ring, thereby capping the opening of the GroEL channel. The sequence is that of Co-chaperonin GroES from Pelobacter propionicus (strain DSM 2379 / NBRC 103807 / OttBd1).